The primary structure comprises 122 residues: Large ribosomal subunit protein bL12 (122 aa).

The protein belongs to the bacterial ribosomal protein bL12 family. As to quaternary structure, homodimer. Part of the ribosomal stalk of the 50S ribosomal subunit. Forms a multimeric L10(L12)X complex, where L10 forms an elongated spine to which 2 to 4 L12 dimers bind in a sequential fashion. Binds GTP-bound translation factors.

Forms part of the ribosomal stalk which helps the ribosome interact with GTP-bound translation factors. Is thus essential for accurate translation. This chain is Large ribosomal subunit protein bL12, found in Xylella fastidiosa (strain M23).